A 152-amino-acid polypeptide reads, in one-letter code: SKP1-like protein 10 (152 aa).

Residues 94-152 (IMAANYLNIKSLLDLACQTVADMIKDNTVEHTRKFFNIENDYTHEEEEAVRRENQWGFE) are interaction with the F-box domain of F-box proteins.

This sequence belongs to the SKP1 family. In terms of assembly, part of a SCF (SKP1-cullin-F-box) protein ligase complex. Interacts with CPR1/CPR30. Expressed in young seedlings, roots, leaves, floral stems, inflorescences, and siliques.

It localises to the nucleus. It participates in protein modification; protein ubiquitination. Functionally, involved in ubiquitination and subsequent proteasomal degradation of target proteins. Together with CUL1, RBX1 and a F-box protein, it forms a SCF E3 ubiquitin ligase complex. The functional specificity of this complex depends on the type of F-box protein. In the SCF complex, it serves as an adapter that links the F-box protein to CUL1. The polypeptide is SKP1-like protein 10 (ASK10) (Arabidopsis thaliana (Mouse-ear cress)).